The primary structure comprises 459 residues: Argininosuccinate lyase (459 aa).

It belongs to the lyase 1 family. Argininosuccinate lyase subfamily.

The protein localises to the cytoplasm. It carries out the reaction 2-(N(omega)-L-arginino)succinate = fumarate + L-arginine. It participates in amino-acid biosynthesis; L-arginine biosynthesis; L-arginine from L-ornithine and carbamoyl phosphate: step 3/3. This Desulforudis audaxviator (strain MP104C) protein is Argininosuccinate lyase.